A 185-amino-acid polypeptide reads, in one-letter code: Orotate phosphoribosyltransferase (185 aa).

Residues Arg99, Lys100, Lys103, and 125-133 contribute to the 5-phospho-alpha-D-ribose 1-diphosphate site; that span reads EDVTTTGGS. Orotate is bound by residues Thr129 and Arg157.

It belongs to the purine/pyrimidine phosphoribosyltransferase family. PyrE subfamily. As to quaternary structure, homodimer. Mg(2+) is required as a cofactor.

It catalyses the reaction orotidine 5'-phosphate + diphosphate = orotate + 5-phospho-alpha-D-ribose 1-diphosphate. It participates in pyrimidine metabolism; UMP biosynthesis via de novo pathway; UMP from orotate: step 1/2. Its function is as follows. Catalyzes the transfer of a ribosyl phosphate group from 5-phosphoribose 1-diphosphate to orotate, leading to the formation of orotidine monophosphate (OMP). The polypeptide is Orotate phosphoribosyltransferase (Methanococcus maripaludis (strain DSM 14266 / JCM 13030 / NBRC 101832 / S2 / LL)).